The sequence spans 114 residues: Iron-sulfur cluster insertion protein ErpA (114 aa).

Positions 42, 106, and 108 each coordinate iron-sulfur cluster.

The protein belongs to the HesB/IscA family. In terms of assembly, homodimer. Iron-sulfur cluster serves as cofactor.

Functionally, required for insertion of 4Fe-4S clusters for at least IspG. In Pseudoalteromonas atlantica (strain T6c / ATCC BAA-1087), this protein is Iron-sulfur cluster insertion protein ErpA.